A 210-amino-acid polypeptide reads, in one-letter code: N-(5'-phosphoribosyl)anthranilate isomerase (210 aa).

It belongs to the TrpF family.

The catalysed reaction is N-(5-phospho-beta-D-ribosyl)anthranilate = 1-(2-carboxyphenylamino)-1-deoxy-D-ribulose 5-phosphate. It participates in amino-acid biosynthesis; L-tryptophan biosynthesis; L-tryptophan from chorismate: step 3/5. The polypeptide is N-(5'-phosphoribosyl)anthranilate isomerase (TRP1) (Eremothecium gossypii (strain ATCC 10895 / CBS 109.51 / FGSC 9923 / NRRL Y-1056) (Yeast)).